A 768-amino-acid polypeptide reads, in one-letter code: Protein ITPRID2 (768 aa).

Disordered regions lie at residues 1-24 (MTTE…AEDS), 39-78 (LQAM…ESEE), and 98-124 (RKSG…CSPG). Composition is skewed to polar residues over residues 39–57 (LQAM…TVTS) and 102–122 (SQDF…STCS). A phosphoserine mark is found at Ser-153, Ser-177, Ser-246, Ser-248, Ser-255, Ser-268, Ser-276, and Ser-312. A disordered region spans residues 315 to 338 (SVKKEEAPQSEAPRVEECHHGRTP). Basic and acidic residues predominate over residues 316–334 (VKKEEAPQSEAPRVEECHH). Lys-317 participates in a covalent cross-link: Glycyl lysine isopeptide (Lys-Gly) (interchain with G-Cter in SUMO2). Residues Ser-378 and Ser-411 each carry the phosphoserine modification. Positions 468–546 (QELQVMRRSL…GLEEQLRAVR (79 aa)) form a coiled coil. Phosphoserine is present on residues Ser-549, Ser-564, Ser-569, Ser-572, Ser-627, and Ser-643. 2 disordered regions span residues 605–647 (IPPG…VGKP) and 663–718 (ALTP…AAEE). Residues 610-627 (SSESVFSQATSESSSVCS) are compositionally biased toward polar residues. Thr-665 bears the Phosphothreonine mark. The segment covering 667-677 (TAPSRTGSVQT) has biased composition (polar residues). Ser-670 bears the Phosphoserine mark. At Thr-677 the chain carries Phosphothreonine. Positions 682-694 (ESSEEVDAAEEAP) are enriched in acidic residues.

It is found in the cytoplasm. The chain is Protein ITPRID2 from Pongo abelii (Sumatran orangutan).